The primary structure comprises 547 residues: MDKNNNNLRLILAIALSFLFIALYSYFFQKPNKTTTQTTKQETTNNHTATSPNAPNAQHFSTTQTTPQENLLSTISFEHARIEIDSLGRIKQVYLKDKKYLTPKQKGFLEHVGHLFSSKENAQPPLKELPLLAADKLKPLEVRFLDPTLNNKAFNTPYSASKTTLGPNEQLVLTQDLGTLSIIKTLTFYDDLHYDLKIAFKSPNNLIPSYVITNGYRPVADLDSYTFSGVLLENSDKKIEKIEDKDAKEIKRFSNTLFLSSVDRYFTTLLFTKDPQGFEALIDSEIGTKNPLGFISLKNEANLHGYIGPKDYRSLKAISPMLTDVIEYGLITFFAKGVFVLLDYLYQFVGNWGWAIILLTIIVRIILYPLSYKGMVSMQKLKELAPKMKELQEKYKGEPQKLQAHMMQLYKKHGANPLGGCLPLILQIPVFFAIYRVLYNAVELKSSEWILWIHDLSIMDPYFILPLLMGASMYWHQSVTPNTMTDPMQAKIFKLLPLLFTIFLITFPAGLVLYWTTNNILSVLQQLIINKVLENKKRMHAQNKKEH.

The helical transmembrane segment at 8–28 threads the bilayer; that stretch reads LRLILAIALSFLFIALYSYFF. Low complexity predominate over residues 37–50; that stretch reads QTTKQETTNNHTAT. Residues 37 to 62 are disordered; the sequence is QTTKQETTNNHTATSPNAPNAQHFST. A compositionally biased stretch (polar residues) spans 51-62; the sequence is SPNAPNAQHFST. The next 5 membrane-spanning stretches (helical) occupy residues 325 to 345, 348 to 368, 414 to 434, 449 to 469, and 495 to 515; these read VIEY…LDYL, FVGN…IILY, GANP…FFAI, WILW…PLLM, and LLPL…VLYW.

This sequence belongs to the OXA1/ALB3/YidC family. Type 1 subfamily. In terms of assembly, interacts with the Sec translocase complex via SecD. Specifically interacts with transmembrane segments of nascent integral membrane proteins during membrane integration.

The protein localises to the cell inner membrane. Required for the insertion and/or proper folding and/or complex formation of integral membrane proteins into the membrane. Involved in integration of membrane proteins that insert both dependently and independently of the Sec translocase complex, as well as at least some lipoproteins. Aids folding of multispanning membrane proteins. This Helicobacter pylori (strain ATCC 700392 / 26695) (Campylobacter pylori) protein is Membrane protein insertase YidC.